The sequence spans 283 residues: Pantoate--beta-alanine ligase (283 aa).

The protein belongs to the pantothenate synthetase family.

The catalysed reaction is (R)-pantoate + beta-alanine + ATP = (R)-pantothenate + AMP + diphosphate + H(+). Its pathway is cofactor biosynthesis; (R)-pantothenate biosynthesis; (R)-pantothenate from (R)-pantoate and beta-alanine: step 1/1. In Schizosaccharomyces pombe (strain 972 / ATCC 24843) (Fission yeast), this protein is Pantoate--beta-alanine ligase (pan6).